The following is a 360-amino-acid chain: Ferredoxin--NADP reductase, leaf isozyme, chloroplastic (360 aa).

Residues 1 to 52 (MAAAVTAAVSLPYSNSTSLPIRTSIVAPERLVFKKVSLNNVSISGRVGTIRA) constitute a chloroplast transit peptide. The 123-residue stretch at 81 to 203 (KEPYVGRCLL…TGPVGKEMLM (123 aa)) folds into the FAD-binding FR-type domain. FAD is bound by residues 139–142 (RLYS), 160–162 (CVK), Y166, 177–179 (VCS), and T218. NADP(+)-binding residues include S142 and K162. Residues T218, 250–251 (VP), 280–281 (SR), K290, 319–320 (GL), and E358 contribute to the NADP(+) site.

It belongs to the ferredoxin--NADP reductase type 1 family. In terms of assembly, monomer. Interacts with TIC62 (via C-terminus). The cofactor is FAD.

Its subcellular location is the plastid. The protein localises to the chloroplast stroma. The protein resides in the chloroplast thylakoid membrane. It catalyses the reaction 2 reduced [2Fe-2S]-[ferredoxin] + NADP(+) + H(+) = 2 oxidized [2Fe-2S]-[ferredoxin] + NADPH. Its pathway is energy metabolism; photosynthesis. Functionally, may play a key role in regulating the relative amounts of cyclic and non-cyclic electron flow to meet the demands of the plant for ATP and reducing power. The protein is Ferredoxin--NADP reductase, leaf isozyme, chloroplastic (PETH) of Pisum sativum (Garden pea).